A 327-amino-acid chain; its full sequence is GMP reductase (327 aa).

Catalysis depends on Cys-176, which acts as the Thioimidate intermediate. 205–228 (IIADGGIRTHGDIAKSIRFGASMV) serves as a coordination point for NADP(+).

Belongs to the IMPDH/GMPR family. GuaC type 2 subfamily.

It carries out the reaction IMP + NH4(+) + NADP(+) = GMP + NADPH + 2 H(+). Its function is as follows. Catalyzes the irreversible NADPH-dependent deamination of GMP to IMP. It functions in the conversion of nucleobase, nucleoside and nucleotide derivatives of G to A nucleotides, and in maintaining the intracellular balance of A and G nucleotides. This Streptococcus agalactiae serotype III (strain NEM316) protein is GMP reductase.